The chain runs to 205 residues: Alpha-1-acid glycoprotein (205 aa).

The signal sequence occupies residues 1 to 18 (MALHMVLVVLSLLPLLEA). N-linked (GlcNAc...) asparagine glycans are attached at residues N25, N34, N76, N94, N104, and N134. A disulfide bridge links C91 with C183.

This sequence belongs to the calycin superfamily. Lipocalin family.

The protein resides in the secreted. Functions as a transport protein in the blood stream. Binds various ligands in the interior of its beta-barrel domain. Appears to function in modulating the activity of the immune system during the acute-phase reaction. In Rattus norvegicus (Rat), this protein is Alpha-1-acid glycoprotein (Orm1).